The primary structure comprises 365 residues: MTITGIIAEFNPFHNGHKYLLDQAEGLKIVAMSGNFMQRGEPAIVDKWTRAQMALENGADLVVELPFLVSVQAADFFGQGAVDILDRLGIDSLVFGTEEVRDYQKIADLYTEKGAEMEKFVENLPDSLSYPQKTQSMWKEFAGLDFSGNTPNHVLALAYAKAVAGRNIKLHPIQRQGAGYHSVNKDVDFASATALRQHQKDQDFLERFMPSVALFEQASKVIWEDYFPLLRYQILSNPDLTTIYQVNQEMAVRIKEAIKTAQSVEELVELVTTKRYTKARVRRLLTYILVQARENVLPEAIHVLGFTEKGRQHLKSLKGQVNLVSRIGKEPWDAMTQKADQIYQLGKPSIAEQNFGRVPIRIETN.

ATP is bound by residues 7 to 20, glycine 96, asparagine 152, and arginine 175; that span reads IAEF…HKYL.

This sequence belongs to the TmcAL family.

The protein localises to the cytoplasm. It carries out the reaction cytidine(34) in elongator tRNA(Met) + acetate + ATP = N(4)-acetylcytidine(34) in elongator tRNA(Met) + AMP + diphosphate. In terms of biological role, catalyzes the formation of N(4)-acetylcytidine (ac(4)C) at the wobble position of elongator tRNA(Met), using acetate and ATP as substrates. First activates an acetate ion to form acetyladenylate (Ac-AMP) and then transfers the acetyl group to tRNA to form ac(4)C34. This Streptococcus pneumoniae (strain 70585) protein is tRNA(Met) cytidine acetate ligase.